The sequence spans 189 residues: Lumazine protein (189 aa).

Lumazine-binding repeat units follow at residues 1-96 and 97-189; these read MFKG…LGKG and ALTG…SNEW.

Requires 6,7-dimethyl-8-(1-D-ribityl)lumazine as cofactor.

In terms of biological role, antenna protein that modulates the color of the bioluminescence emission of the luciferase. In the presence of LumP, luciferase emission is shifted to higher energy values (shorter wavelength). This chain is Lumazine protein (luxL), found in Photobacterium phosphoreum.